The chain runs to 415 residues: ATP-dependent RNA helicase RhlB (415 aa).

The Q motif motif lies at 9 to 37 (QRFSALPLHPIVRGALAKKGFDFCTPIQA). In terms of domain architecture, Helicase ATP-binding spans 40–218 (LPISLNGRDV…FEDMNEPEYI (179 aa)). Residue 53–60 (AQTGTGKT) coordinates ATP. Positions 164–167 (DEAD) match the DEAD box motif. The Helicase C-terminal domain maps to 241-389 (DKMALLLTLM…VSQYETEALL (149 aa)).

Belongs to the DEAD box helicase family. RhlB subfamily. As to quaternary structure, component of the RNA degradosome, which is a multiprotein complex involved in RNA processing and mRNA degradation.

Its subcellular location is the cytoplasm. The enzyme catalyses ATP + H2O = ADP + phosphate + H(+). In terms of biological role, DEAD-box RNA helicase involved in RNA degradation. Has RNA-dependent ATPase activity and unwinds double-stranded RNA. The protein is ATP-dependent RNA helicase RhlB of Haemophilus influenzae (strain ATCC 51907 / DSM 11121 / KW20 / Rd).